The following is a 110-amino-acid chain: Small ribosomal subunit protein bS16 (110 aa).

The disordered stretch occupies residues 79–110 (AAGVKKREARNNPQKAVPRKERKAQAEAAAKG).

This sequence belongs to the bacterial ribosomal protein bS16 family.

This is Small ribosomal subunit protein bS16 from Bradyrhizobium diazoefficiens (strain JCM 10833 / BCRC 13528 / IAM 13628 / NBRC 14792 / USDA 110).